Consider the following 100-residue polypeptide: Small ribosomal subunit protein uS14m (100 aa).

The protein belongs to the universal ribosomal protein uS14 family.

The protein resides in the mitochondrion. In Brassica napus (Rape), this protein is Small ribosomal subunit protein uS14m (RPS14).